The primary structure comprises 483 residues: UDP-N-acetylmuramoyl-L-alanyl-D-glutamate--2,6-diaminopimelate ligase (483 aa).

A UDP-N-acetyl-alpha-D-muramoyl-L-alanyl-D-glutamate-binding site is contributed by S29. Position 112 to 118 (112 to 118 (GTNGKTT)) interacts with ATP. Residues 154–155 (TT), S181, and R189 contribute to the UDP-N-acetyl-alpha-D-muramoyl-L-alanyl-D-glutamate site. K221 is modified (N6-carboxylysine). Meso-2,6-diaminopimelate is bound by residues R380, 404–407 (DNPR), G454, and E458. A Meso-diaminopimelate recognition motif motif is present at residues 404-407 (DNPR).

This sequence belongs to the MurCDEF family. MurE subfamily. Requires Mg(2+) as cofactor. In terms of processing, carboxylation is probably crucial for Mg(2+) binding and, consequently, for the gamma-phosphate positioning of ATP.

It localises to the cytoplasm. It catalyses the reaction UDP-N-acetyl-alpha-D-muramoyl-L-alanyl-D-glutamate + meso-2,6-diaminopimelate + ATP = UDP-N-acetyl-alpha-D-muramoyl-L-alanyl-gamma-D-glutamyl-meso-2,6-diaminopimelate + ADP + phosphate + H(+). It participates in cell wall biogenesis; peptidoglycan biosynthesis. Functionally, catalyzes the addition of meso-diaminopimelic acid to the nucleotide precursor UDP-N-acetylmuramoyl-L-alanyl-D-glutamate (UMAG) in the biosynthesis of bacterial cell-wall peptidoglycan. This is UDP-N-acetylmuramoyl-L-alanyl-D-glutamate--2,6-diaminopimelate ligase from Clostridium botulinum (strain ATCC 19397 / Type A).